Here is a 359-residue protein sequence, read N- to C-terminus: S-adenosylmethionine:tRNA ribosyltransferase-isomerase (359 aa).

This sequence belongs to the QueA family. Monomer.

The protein resides in the cytoplasm. It carries out the reaction 7-aminomethyl-7-carbaguanosine(34) in tRNA + S-adenosyl-L-methionine = epoxyqueuosine(34) in tRNA + adenine + L-methionine + 2 H(+). It participates in tRNA modification; tRNA-queuosine biosynthesis. In terms of biological role, transfers and isomerizes the ribose moiety from AdoMet to the 7-aminomethyl group of 7-deazaguanine (preQ1-tRNA) to give epoxyqueuosine (oQ-tRNA). The sequence is that of S-adenosylmethionine:tRNA ribosyltransferase-isomerase from Synechococcus elongatus (strain ATCC 33912 / PCC 7942 / FACHB-805) (Anacystis nidulans R2).